Here is a 506-residue protein sequence, read N- to C-terminus: Histidine ammonia-lyase (506 aa).

Positions 143 to 145 (ASG) form a cross-link, 5-imidazolinone (Ala-Gly). S144 is subject to 2,3-didehydroalanine (Ser).

Belongs to the PAL/histidase family. Contains an active site 4-methylidene-imidazol-5-one (MIO), which is formed autocatalytically by cyclization and dehydration of residues Ala-Ser-Gly.

Its subcellular location is the cytoplasm. It carries out the reaction L-histidine = trans-urocanate + NH4(+). It participates in amino-acid degradation; L-histidine degradation into L-glutamate; N-formimidoyl-L-glutamate from L-histidine: step 1/3. This is Histidine ammonia-lyase from Salmonella arizonae (strain ATCC BAA-731 / CDC346-86 / RSK2980).